We begin with the raw amino-acid sequence, 328 residues long: Type II secretion system protein K (328 aa).

Positions 1-7 (MRSRQRG) are cleaved as a propeptide — leader sequence. Residues 8–28 (AALLVVLLILALMVTIAAVIT) form a helical membrane-spanning segment. The Periplasmic portion of the chain corresponds to 29–328 (ERTGKAFLRT…QYGGYRTVNP (300 aa)).

The protein belongs to the GSP K family. As to quaternary structure, type II secretion is composed of four main components: the outer membrane complex, the inner membrane complex, the cytoplasmic secretion ATPase and the periplasm-spanning pseudopilus. Interacts with core component OutG. Cleaved by prepilin peptidase.

The protein localises to the cell inner membrane. Functionally, component of the type II secretion system required for the energy-dependent secretion of extracellular factors such as proteases and toxins from the periplasm. Plays a role in pseudopilus assembly and seems to control its length. Interacts with the pseudopilus tip complex that is critical for the recognition and binding of secretion substrates. The protein is Type II secretion system protein K (outK) of Pectobacterium carotovorum subsp. carotovorum (Erwinia carotovora subsp. carotovora).